Reading from the N-terminus, the 302-residue chain is Deubiquitinase OTUD6B (302 aa).

Residues 1 to 10 (MEGSEDEEAE) are compositionally biased toward acidic residues. 2 disordered regions span residues 1 to 52 (MEGS…KQLA) and 99 to 121 (EQQI…AALE). Residues 106 to 116 (RISKAQKRREK) are compositionally biased toward basic residues. Residues 156 to 293 (LEIKQIPSDG…GEHYNSVKLL (138 aa)) enclose the OTU domain. Residues 161-167 (IPSDGHC) are cys-loop. Aspartate 164 is a catalytic residue. Catalysis depends on cysteine 167, which acts as the Nucleophile. Residues 228–238 (IANTAAWGGQL) are variable-loop. A his-loop region spans residues 276–286 (YMRHAYGLGEH). Histidine 286 is a catalytic residue.

It carries out the reaction Thiol-dependent hydrolysis of ester, thioester, amide, peptide and isopeptide bonds formed by the C-terminal Gly of ubiquitin (a 76-residue protein attached to proteins as an intracellular targeting signal).. Its function is as follows. Deubiquitinating enzyme that may play a role in the ubiquitin-dependent regulation of different cellular processes. This chain is Deubiquitinase OTUD6B (OTUD6B), found in Gallus gallus (Chicken).